The chain runs to 520 residues: 2,3-bisphosphoglycerate-independent phosphoglycerate mutase (520 aa).

The Mn(2+) site is built by Asp-13 and Ser-63. Ser-63 acts as the Phosphoserine intermediate in catalysis. Residues His-124, 154 to 155 (RD), Arg-192, Arg-198, 268 to 271 (RADR), and Lys-342 contribute to the substrate site. Mn(2+) contacts are provided by Asp-409, His-413, Asp-450, His-451, and His-469.

Belongs to the BPG-independent phosphoglycerate mutase family. Monomer. It depends on Mn(2+) as a cofactor.

The enzyme catalyses (2R)-2-phosphoglycerate = (2R)-3-phosphoglycerate. The protein operates within carbohydrate degradation; glycolysis; pyruvate from D-glyceraldehyde 3-phosphate: step 3/5. Catalyzes the interconversion of 2-phosphoglycerate and 3-phosphoglycerate. This chain is 2,3-bisphosphoglycerate-independent phosphoglycerate mutase, found in Colwellia psychrerythraea (strain 34H / ATCC BAA-681) (Vibrio psychroerythus).